A 704-amino-acid chain; its full sequence is Elongation factor G (704 aa).

The tr-type G domain maps to 8 to 290 (ARYRNIGISA…AVIDYLPSPV (283 aa)). GTP is bound by residues 17–24 (AHIDAGKT), 88–92 (DTPGH), and 142–145 (NKMD).

The protein belongs to the TRAFAC class translation factor GTPase superfamily. Classic translation factor GTPase family. EF-G/EF-2 subfamily.

It localises to the cytoplasm. Functionally, catalyzes the GTP-dependent ribosomal translocation step during translation elongation. During this step, the ribosome changes from the pre-translocational (PRE) to the post-translocational (POST) state as the newly formed A-site-bound peptidyl-tRNA and P-site-bound deacylated tRNA move to the P and E sites, respectively. Catalyzes the coordinated movement of the two tRNA molecules, the mRNA and conformational changes in the ribosome. This Salmonella agona (strain SL483) protein is Elongation factor G.